The sequence spans 192 residues: Segregation and condensation protein B (192 aa).

The protein belongs to the ScpB family. As to quaternary structure, homodimer. Homodimerization may be required to stabilize the binding of ScpA to the Smc head domains. Component of a cohesin-like complex composed of ScpA, ScpB and the Smc homodimer, in which ScpA and ScpB bind to the head domain of Smc. The presence of the three proteins is required for the association of the complex with DNA.

It is found in the cytoplasm. In terms of biological role, participates in chromosomal partition during cell division. May act via the formation of a condensin-like complex containing Smc and ScpA that pull DNA away from mid-cell into both cell halves. The chain is Segregation and condensation protein B from Mycoplasma mobile (strain ATCC 43663 / 163K / NCTC 11711) (Mesomycoplasma mobile).